The chain runs to 72 residues: UPF0154 protein lhv_1362 (72 aa).

The chain crosses the membrane as a helical span at residues 3–23 (LGLAIFLIIIALLVGAVAGFY).

Belongs to the UPF0154 family.

The protein localises to the cell membrane. The protein is UPF0154 protein lhv_1362 of Lactobacillus helveticus (strain DPC 4571).